The primary structure comprises 371 residues: 43 kDa relaxation protein (371 aa).

Disordered regions lie at residues 1-46, 150-172, 196-221, 263-291, and 328-371; these read MASY…GNMP, KEPDAVAQKRHVSGKHRPNAKNT, RVDSRSLKAQGIDREPERHLGAGQVQ, SERDTLTLKQELKSEPEQESHSGRTFDFE, and IHQE…SFSR. Basic and acidic residues predominate over residues 22-42; that stretch reads YIAREGKYAREKDSDLEHKES. A compositionally biased stretch (basic residues) spans 157–168; it reads QKRHVSGKHRPN. Basic and acidic residues predominate over residues 196-215; that stretch reads RVDSRSLKAQGIDREPERHL. Residues 330–365 are compositionally biased toward basic and acidic residues; it reads QEMERQRERERLAEKQRQQEKERQRLAEQIRQKPDK.

The protein belongs to the MobA/MobL family.

In terms of biological role, this protein is probably required for relaxation complex formation. The polypeptide is 43 kDa relaxation protein (Salmonella typhimurium).